The following is a 163-amino-acid chain: Protein FAM167B (163 aa).

The stretch at 73–132 (FDSMDSALEWLRRELREMQAQDRQLAGQLLRLRAQLHRLKMDQACHLHQELLDEAELELE) forms a coiled coil.

This sequence belongs to the FAM167 (SEC) family.

The sequence is that of Protein FAM167B (FAM167B) from Homo sapiens (Human).